Here is a 469-residue protein sequence, read N- to C-terminus: Sulfate adenylyltransferase subunit 1 (469 aa).

The region spanning 22–236 (KDMLRVLTCG…LLNTVSVEQD (215 aa)) is the tr-type G domain. Residues 31–38 (GSVDDGKS) are G1. 31 to 38 (GSVDDGKS) serves as a coordination point for GTP. Residues 89 to 93 (GITID) form a G2 region. The interval 110-113 (DTPG) is G3. Residues 110–114 (DTPGH) and 165–168 (NKMD) each bind GTP. Residues 165 to 168 (NKMD) are G4. The interval 202-204 (SAL) is G5.

It belongs to the TRAFAC class translation factor GTPase superfamily. Classic translation factor GTPase family. CysN/NodQ subfamily. Heterodimer composed of CysD, the smaller subunit, and CysN.

The catalysed reaction is sulfate + ATP + H(+) = adenosine 5'-phosphosulfate + diphosphate. It functions in the pathway sulfur metabolism; hydrogen sulfide biosynthesis; sulfite from sulfate: step 1/3. Functionally, with CysD forms the ATP sulfurylase (ATPS) that catalyzes the adenylation of sulfate producing adenosine 5'-phosphosulfate (APS) and diphosphate, the first enzymatic step in sulfur assimilation pathway. APS synthesis involves the formation of a high-energy phosphoric-sulfuric acid anhydride bond driven by GTP hydrolysis by CysN coupled to ATP hydrolysis by CysD. The protein is Sulfate adenylyltransferase subunit 1 of Shewanella woodyi (strain ATCC 51908 / MS32).